Reading from the N-terminus, the 393-residue chain is Ribonucleoside-diphosphate reductase subunit M2 (393 aa).

The residue at position 18 (Ser18) is a Phosphoserine. Fe cation-binding residues include Asp142, Glu173, and His176. Tyr180 is a catalytic residue. Fe cation contacts are provided by Glu236, Glu270, and His273.

Belongs to the ribonucleoside diphosphate reductase small chain family. As to quaternary structure, heterodimer of a large and a small subunit. The cofactor is Fe cation.

Its subcellular location is the cytoplasm. The enzyme catalyses a 2'-deoxyribonucleoside 5'-diphosphate + [thioredoxin]-disulfide + H2O = a ribonucleoside 5'-diphosphate + [thioredoxin]-dithiol. Provides the precursors necessary for DNA synthesis. Catalyzes the biosynthesis of deoxyribonucleotides from the corresponding ribonucleotides. This is Ribonucleoside-diphosphate reductase subunit M2 (RnrS) from Drosophila melanogaster (Fruit fly).